The chain runs to 94 residues: Large ribosomal subunit protein bL27 (94 aa).

A propeptide spanning residues 1 to 9 (MLKLNLQFF) is cleaved from the precursor. A disordered region spans residues 13–32 (KGLGSTKNGRDSESKRLGAK). Basic and acidic residues predominate over residues 20–32 (NGRDSESKRLGAK).

It belongs to the bacterial ribosomal protein bL27 family. Post-translationally, the N-terminus is cleaved by ribosomal processing cysteine protease Prp.

The chain is Large ribosomal subunit protein bL27 from Staphylococcus saprophyticus subsp. saprophyticus (strain ATCC 15305 / DSM 20229 / NCIMB 8711 / NCTC 7292 / S-41).